A 432-amino-acid chain; its full sequence is MDEAVGDLKQALPCVAESPAVHVEVLQRSGSTAKKEDIKSSVYRLLNRHNIVFGDYVWTEFDDPFLSRNVQSVSIVDTELKAKDPQPIDLSACTIALHIFQLNEEGPSSENLDEETENIIAASHWVLPAAEFHGLWDSLVYDVEVKSHLLDYVMTTVLFSDKNVDSNLITWNRVVLLHGPPGTGKTSLCKALAQKLTIRLSSRYRYGQLIEINSHSLFSKWFSESGKLVTKMFQKIQDLIDDKEALVFVLIDEVESLTAARNACRAGAEPSDAIRVVNAVLTQIDQIKRHSNVVILTTSNITEKIDVAFVDRADIKQYIGPPSAAAIFKIYLSCLEELMKCQIIYPRQQLLTLRELEMIGFIENNVSKLSLLLSEISRKSEGLSGRVLRKLPFLAHALYIQAPSVTIEGFLQALSLAVDKQFEEKKKLSAYV.

M1 is modified (N-acetylmethionine). 179 to 186 is a binding site for ATP; the sequence is GPPGTGKT.

This sequence belongs to the AAA ATPase family. PCH2 subfamily. Specifically interacts with the ligand binding domain of the thyroid receptor (TR). This interaction does not require the presence of thyroid hormone for its interaction. Interacts with proteasome subunit PSMA8; to participate in meiosis progression during spermatogenesis. Widely expressed, including in testis.

Its function is as follows. Plays a key role in chromosome recombination and chromosome structure development during meiosis. Required at early steps in meiotic recombination that leads to non-crossovers pathways. Also needed for efficient completion of homologous synapsis by influencing crossover distribution along the chromosomes affecting both crossovers and non-crossovers pathways. Also required for development of higher-order chromosome structures and is needed for synaptonemal-complex formation. In males, required for efficient synapsis of the sex chromosomes and for sex body formation. Promotes early steps of the DNA double-strand breaks (DSBs) repair process upstream of the assembly of RAD51 complexes. Required for depletion of HORMAD1 and HORMAD2 from synapsed chromosomes. Plays a role in mitotic spindle assembly checkpoint (SAC) activation. The polypeptide is Pachytene checkpoint protein 2 homolog (Trip13) (Mus musculus (Mouse)).